The sequence spans 140 residues: Transcription antitermination protein NusB (140 aa).

The protein belongs to the NusB family.

Its function is as follows. Involved in transcription antitermination. Required for transcription of ribosomal RNA (rRNA) genes. Binds specifically to the boxA antiterminator sequence of the ribosomal RNA (rrn) operons. The chain is Transcription antitermination protein NusB from Leptospira biflexa serovar Patoc (strain Patoc 1 / Ames).